The sequence spans 282 residues: 2-dehydro-3-deoxyphosphooctonate aldolase (282 aa).

It belongs to the KdsA family.

It localises to the cytoplasm. It catalyses the reaction D-arabinose 5-phosphate + phosphoenolpyruvate + H2O = 3-deoxy-alpha-D-manno-2-octulosonate-8-phosphate + phosphate. Its pathway is carbohydrate biosynthesis; 3-deoxy-D-manno-octulosonate biosynthesis; 3-deoxy-D-manno-octulosonate from D-ribulose 5-phosphate: step 2/3. It functions in the pathway bacterial outer membrane biogenesis; lipopolysaccharide biosynthesis. This Shewanella woodyi (strain ATCC 51908 / MS32) protein is 2-dehydro-3-deoxyphosphooctonate aldolase.